The primary structure comprises 413 residues: Acyltransferase mokF (413 aa).

Monacolin J is bound at residue R93. Residue S96 is the Acyl-ester intermediate of the active site. Residues R193, Y208, and Y278 each coordinate monacolin J. G386 provides a ligand contact to 2-methylbutanoate.

Belongs to the class-A beta-lactamase family.

It carries out the reaction monacolin J carboxylate + (S)-2-methylbutanoyl-[2-methylbutanoate polyketide synthase] = lovastatin carboxylate + holo-[2-methylbutanoate polyketide synthase]. It functions in the pathway polyketide biosynthesis; lovastatin biosynthesis. Functionally, acyltransferase; part of the gene cluster that mediates the biosynthesis of monakolin K, also known as lovastatin, and which acts as a potent competitive inhibitor of HMG-CoA reductase. Monakolin K biosynthesis is performed in two stages. The first stage is catalyzed by the nonaketide synthase mokA, which belongs to type I polyketide synthases and catalyzes the iterative nine-step formation of the polyketide. This PKS stage is completed by the action of dehydrogenase mokE, which catalyzes the NADPH-dependent reduction of the unsaturated tetra-, penta- and heptaketide intermediates that arise during the mokA-mediated biosynthesis of the nonaketide chain and leads to dihydromonacolin L. Covalently bound dihydromonacolin L is released from mokA by the mokD esterase. Conversion of dihydromonacolin L into monacolin L and then monacolin J is subsequently performed with the participation of molecular oxygen and P450 monoogygenase mokC. Finally, mokF performs the conversion of monacoline J to monacoline K through the addition of the side-chain diketide moiety (2R)-2-methylbutanoate produced by the diketide synthase mokB. The sequence is that of Acyltransferase mokF from Monascus pilosus (Red mold).